We begin with the raw amino-acid sequence, 345 residues long: tRNA-specific 2-thiouridylase MnmA 1 (345 aa).

Residues 9–16 (GMSGGIDS) and Leu-35 contribute to the ATP site. Residue Cys-96 is the Nucleophile of the active site. Cys-96 and Cys-191 are oxidised to a cystine. Gly-120 serves as a coordination point for ATP. Residues 138–140 (KDQ) are interaction with tRNA. Cys-191 serves as the catalytic Cysteine persulfide intermediate. Residues 293–294 (RY) are interaction with tRNA.

This sequence belongs to the MnmA/TRMU family.

It localises to the cytoplasm. The enzyme catalyses S-sulfanyl-L-cysteinyl-[protein] + uridine(34) in tRNA + AH2 + ATP = 2-thiouridine(34) in tRNA + L-cysteinyl-[protein] + A + AMP + diphosphate + H(+). Catalyzes the 2-thiolation of uridine at the wobble position (U34) of tRNA, leading to the formation of s(2)U34. The sequence is that of tRNA-specific 2-thiouridylase MnmA 1 from Aliarcobacter butzleri (strain RM4018) (Arcobacter butzleri).